The primary structure comprises 157 residues: Transcriptional repressor NrdR (157 aa).

The segment at 1 to 22 (MKCPYCSSPDSRVINSRPSDDG) is disordered. The segment at 3–34 (CPYCSSPDSRVINSRPSDDGASIRRRRECLTC) is a zinc-finger region. The segment covering 8-17 (SPDSRVINSR) has biased composition (polar residues). The ATP-cone domain occupies 49–136 (LMVVKRSGVR…VYRDFDSLER (88 aa)).

This sequence belongs to the NrdR family. Zn(2+) serves as cofactor.

Negatively regulates transcription of bacterial ribonucleotide reductase nrd genes and operons by binding to NrdR-boxes. The polypeptide is Transcriptional repressor NrdR (Deinococcus radiodurans (strain ATCC 13939 / DSM 20539 / JCM 16871 / CCUG 27074 / LMG 4051 / NBRC 15346 / NCIMB 9279 / VKM B-1422 / R1)).